Consider the following 745-residue polypeptide: MTNITHLLGEIKDIDETLKVHKLSKQDYEEILKILKRPPNLIELGIFAAMWSEHCSYKSSKKYLNGFPTKAPWVVQGPGENAGIIDIGENLCAVFKIESHNHPSFIEPHAGAATGVGGIMRDIFTMGARPVASLNSIRFGDISDNGTLGKKHRYLLRGVVEGIGSYGNCMGVPTIGGEMSFESCYNGNILVNAFCLGLVKKDEIFYGKAEGIGNPVIYVGSKTGRDGLGGAVMSSDSFSSTSKAVRSAVQVGDPFAEKLLLEACLELFKQDLIVGIQDMGAAGLTSSSFEMAGRSGSGMTLYLDKVPMREEGMNPYELMLSESQERMLICAKKGCEQQVLDIFAKWEVDAAIIGEVTKSGIMELFWYGEKCAEIPIAQLSENAPMLDMPLRPVAVQTHKANQLKTSQSAQEIFITLLGSVEVANKRWVYSQYDSSVQSNTITPAGSGDASMIRIKGTNSALSMSVDCNMRYCYLDPKNGAKIAVATSGRNSIVNGAKPLAISDCLNFGSPHNPEVMWAFKEVCQGIKESCKVLNTPVVSGNVSLHNQSDGVDIYPTPSIVSVGLIDDVSKVVSSTFQTQGNMLVLLGEIKAEFGGSLAQKILEGHIYGQIPSIDLTQEFALWNLMLEASDECMLSAAKDIGEGGLAITLAKMALGNGECQPIGCNVHTHLPSQLLFAPSQSCIIVEVAGEHLNTLKQKAKQHKIAFTEIGCVGGDIFCVDEINISLEEMKKLYFESFEKLIAQDL.

His-54 is a catalytic residue. Positions 57 and 96 each coordinate ATP. Residue Glu-98 participates in Mg(2+) binding. Substrate contacts are provided by residues 99–102 (SHNH) and Arg-121. His-100 functions as the Proton acceptor in the catalytic mechanism. Asp-122 is a binding site for Mg(2+). Gln-250 lines the substrate pocket. Asp-278 is a Mg(2+) binding site. Residue 322–324 (ESQ) participates in substrate binding. Residues Asp-503 and Gly-540 each contribute to the ATP site. Residue Asn-541 participates in Mg(2+) binding. Ser-543 provides a ligand contact to substrate.

This sequence belongs to the FGAMS family. As to quaternary structure, monomer. Part of the FGAM synthase complex composed of 1 PurL, 1 PurQ and 2 PurS subunits.

The protein localises to the cytoplasm. It carries out the reaction N(2)-formyl-N(1)-(5-phospho-beta-D-ribosyl)glycinamide + L-glutamine + ATP + H2O = 2-formamido-N(1)-(5-O-phospho-beta-D-ribosyl)acetamidine + L-glutamate + ADP + phosphate + H(+). The protein operates within purine metabolism; IMP biosynthesis via de novo pathway; 5-amino-1-(5-phospho-D-ribosyl)imidazole from N(2)-formyl-N(1)-(5-phospho-D-ribosyl)glycinamide: step 1/2. Its function is as follows. Part of the phosphoribosylformylglycinamidine synthase complex involved in the purines biosynthetic pathway. Catalyzes the ATP-dependent conversion of formylglycinamide ribonucleotide (FGAR) and glutamine to yield formylglycinamidine ribonucleotide (FGAM) and glutamate. The FGAM synthase complex is composed of three subunits. PurQ produces an ammonia molecule by converting glutamine to glutamate. PurL transfers the ammonia molecule to FGAR to form FGAM in an ATP-dependent manner. PurS interacts with PurQ and PurL and is thought to assist in the transfer of the ammonia molecule from PurQ to PurL. This is Phosphoribosylformylglycinamidine synthase subunit PurL from Helicobacter hepaticus (strain ATCC 51449 / 3B1).